The primary structure comprises 251 residues: 14-3-3-like protein (251 aa).

Belongs to the 14-3-3 family.

The chain is 14-3-3-like protein from Fucus vesiculosus (Bladder wrack).